The following is a 396-amino-acid chain: Methionine import ATP-binding protein MetN 2 (396 aa).

An ABC transporter domain is found at 41–280 (VSFELVGKVF…PRHGATRALL (240 aa)). 77–84 (GRSGAGKS) contacts ATP.

This sequence belongs to the ABC transporter superfamily. Methionine importer (TC 3.A.1.24) family. In terms of assembly, the complex is composed of two ATP-binding proteins (MetN), two transmembrane proteins (MetI) and a solute-binding protein (MetQ).

It localises to the cell inner membrane. The enzyme catalyses L-methionine(out) + ATP + H2O = L-methionine(in) + ADP + phosphate + H(+). The catalysed reaction is D-methionine(out) + ATP + H2O = D-methionine(in) + ADP + phosphate + H(+). In terms of biological role, part of the ABC transporter complex MetNIQ involved in methionine import. Responsible for energy coupling to the transport system. In Burkholderia pseudomallei (strain 1710b), this protein is Methionine import ATP-binding protein MetN 2.